A 562-amino-acid chain; its full sequence is DNA ligase (562 aa).

Position 252 (Glu-252) interacts with ATP. Lys-254 (N6-AMP-lysine intermediate) is an active-site residue. Positions 259, 274, 303, 343, 419, and 425 each coordinate ATP.

Belongs to the ATP-dependent DNA ligase family. Requires Mg(2+) as cofactor.

It catalyses the reaction ATP + (deoxyribonucleotide)n-3'-hydroxyl + 5'-phospho-(deoxyribonucleotide)m = (deoxyribonucleotide)n+m + AMP + diphosphate.. Its function is as follows. DNA ligase that seals nicks in double-stranded DNA during DNA replication, DNA recombination and DNA repair. The polypeptide is DNA ligase (Methanococcus aeolicus (strain ATCC BAA-1280 / DSM 17508 / OCM 812 / Nankai-3)).